Reading from the N-terminus, the 360-residue chain is MLLIIDLQTAFINWFVGLGVSKDISAALWIPLPILVVIVGATIGVLVIVWLERKISAGVQQRIGPEFAGPLGVLQPLADGLKLVFKEDIIPSKADIWLFTLGPALVVIPVFLAYLVVPFGHDLVVADISLGVFFWIAISSIAPIGLLMSGYGSNNKYSFLGGLRAAAQAISYEIPLSLCVLAICLLSNSLSTVEIVEQQSAYGILGWNVWRQPIGFVSFLIAALAECERLPFDLPEAEEELVAGYQTEYSGMKFGLFYVGSYVNLLLSSLFATILYLGGWTSPITFSIPFQTSEIEIFAAFLGIGMTLLKAYLFIFLSILTRWTLPRVRIDQLLDLGWKFLLPISLGNLLLTASLRLAFY.

Helical transmembrane passes span Trp29–Val49, Ile96–Val116, Ile128–Met148, Ala166–Leu186, Ile204–Leu224, Gly255–Leu277, Ile297–Leu317, and Leu333–Ala353.

The protein belongs to the complex I subunit 1 family. NDH is composed of at least 16 different subunits, 5 of which are encoded in the nucleus.

The protein resides in the plastid. It is found in the chloroplast thylakoid membrane. It catalyses the reaction a plastoquinone + NADH + (n+1) H(+)(in) = a plastoquinol + NAD(+) + n H(+)(out). The catalysed reaction is a plastoquinone + NADPH + (n+1) H(+)(in) = a plastoquinol + NADP(+) + n H(+)(out). NDH shuttles electrons from NAD(P)H:plastoquinone, via FMN and iron-sulfur (Fe-S) centers, to quinones in the photosynthetic chain and possibly in a chloroplast respiratory chain. The immediate electron acceptor for the enzyme in this species is believed to be plastoquinone. Couples the redox reaction to proton translocation, and thus conserves the redox energy in a proton gradient. This Chlorokybus atmophyticus (Soil alga) protein is NAD(P)H-quinone oxidoreductase subunit 1, chloroplastic.